A 363-amino-acid chain; its full sequence is Regulator of G-protein signaling rgs-3 (363 aa).

A disordered region spans residues 1 to 70 (MWRSYKAETP…NSSATSPTPS (70 aa)). The span at 21 to 35 (LNLHDSSESDHEGRQ) shows a compositional bias: basic and acidic residues. Low complexity-rich tracts occupy residues 36-50 (SRSA…APAS) and 58-70 (PITN…PTPS). RGS domains lie at 112–225 (NCAN…LEYL) and 240–359 (SFEG…IDLL).

In terms of processing, may be phosphorylated and activated by egl-4.

Functionally, modulates chemotaxis responses by regulating positively the sensitivity to CO2 levels in BAG neurons and by regulating negatively the sensitivity to quinine in ASH sensory neurons. The polypeptide is Regulator of G-protein signaling rgs-3 (rgs-3) (Caenorhabditis elegans).